The primary structure comprises 158 residues: Large ribosomal subunit protein uL11 (158 aa).

This sequence belongs to the universal ribosomal protein uL11 family. As to quaternary structure, part of the ribosomal stalk of the 50S ribosomal subunit. Interacts with L10 and the large rRNA to form the base of the stalk. L10 forms an elongated spine to which L12 dimers bind in a sequential fashion forming a multimeric L10(L12)X complex.

Forms part of the ribosomal stalk which helps the ribosome interact with GTP-bound translation factors. The protein is Large ribosomal subunit protein uL11 of Methanocella arvoryzae (strain DSM 22066 / NBRC 105507 / MRE50).